A 345-amino-acid polypeptide reads, in one-letter code: L-threonine 3-dehydrogenase (345 aa).

C39 provides a ligand contact to Zn(2+). Active-site charge relay system residues include T41 and H44. 6 residues coordinate Zn(2+): H64, E65, C94, C97, C100, and C108. NAD(+) is bound by residues I176, D196, R201, L263–I265, and V287–Y288.

Belongs to the zinc-containing alcohol dehydrogenase family. As to quaternary structure, homotetramer. Zn(2+) is required as a cofactor.

It localises to the cytoplasm. The catalysed reaction is L-threonine + NAD(+) = (2S)-2-amino-3-oxobutanoate + NADH + H(+). The protein operates within amino-acid degradation; L-threonine degradation via oxydo-reductase pathway; glycine from L-threonine: step 1/2. Functionally, catalyzes the NAD(+)-dependent oxidation of L-threonine to 2-amino-3-ketobutyrate. The protein is L-threonine 3-dehydrogenase of Anaeromyxobacter dehalogenans (strain 2CP-1 / ATCC BAA-258).